The sequence spans 534 residues: Dual specificity calcium/calmodulin-dependent 3',5'-cyclic nucleotide phosphodiesterase 1B (534 aa).

Residues 1–21 form a disordered region; sequence MELSPRSPPEMLESDCPSPLE. A phosphoserine mark is found at serine 7 and serine 14. Calmodulin-binding regions lie at residues 27–47 and 116–139; these read SKKMWIKLRSLLRYMVKQLEN and EKPKFRSIVHAVQAGIFVERMFRR. One can recognise a PDEase domain in the interval 144-501; that stretch reads VGPTYSTAVL…QKWKERAASG (358 aa). Histidine 221 functions as the Proton donor in the catalytic mechanism. Zn(2+)-binding residues include histidine 225, histidine 261, aspartate 262, and aspartate 368. Aspartate 262 serves as a coordination point for Mg(2+). Disordered regions lie at residues 442–473 and 494–534; these read VQPTGDDDSKSKNQPSFQWRQPSLDVEVGDPN and WKER…GNLD. Polar residues predominate over residues 453–462; that stretch reads KNQPSFQWRQ. 2 positions are modified to phosphoserine: serine 464 and serine 512.

The protein belongs to the cyclic nucleotide phosphodiesterase family. PDE1 subfamily. Homodimer. Zn(2+) serves as cofactor. Mg(2+) is required as a cofactor. In terms of tissue distribution, expressed in central nervous system regions. Most abundant in basal ganglia. Also found in kidney papilla and adrenal medulla.

It is found in the cytoplasm. The protein resides in the cytosol. The enzyme catalyses a nucleoside 3',5'-cyclic phosphate + H2O = a nucleoside 5'-phosphate + H(+). It catalyses the reaction 3',5'-cyclic GMP + H2O = GMP + H(+). The catalysed reaction is 3',5'-cyclic AMP + H2O = AMP + H(+). Type I PDE are activated by the binding of calmodulin in the presence of Ca(2+). Cyclic nucleotide phosphodiesterase with a dual specificity for the second messengers cAMP and cGMP, which are key regulators of many important physiological processes. Has a preference for cGMP as a substrate. The polypeptide is Dual specificity calcium/calmodulin-dependent 3',5'-cyclic nucleotide phosphodiesterase 1B (Bos taurus (Bovine)).